The primary structure comprises 427 residues: Adenylosuccinate synthetase (427 aa).

GTP contacts are provided by residues 12–18 and 40–42; these read GDEGKGK and GHT. D13 serves as the catalytic Proton acceptor. D13 and G40 together coordinate Mg(2+). IMP-binding positions include 13 to 16, 38 to 41, T128, R142, Q223, T238, and R302; these read DEGK and NAGH. Residue H41 is the Proton donor of the active site. Position 298 to 304 (298 to 304) interacts with substrate; sequence TTTGRPR. Residues R304, 330–332, and 412–414 each bind GTP; these read SID and SVG.

It belongs to the adenylosuccinate synthetase family. Homodimer. Mg(2+) is required as a cofactor.

The protein resides in the cytoplasm. It catalyses the reaction IMP + L-aspartate + GTP = N(6)-(1,2-dicarboxyethyl)-AMP + GDP + phosphate + 2 H(+). It functions in the pathway purine metabolism; AMP biosynthesis via de novo pathway; AMP from IMP: step 1/2. In terms of biological role, plays an important role in the de novo pathway of purine nucleotide biosynthesis. Catalyzes the first committed step in the biosynthesis of AMP from IMP. This Staphylococcus aureus (strain MW2) protein is Adenylosuccinate synthetase.